The sequence spans 307 residues: B3 domain-containing protein At5g18000 (307 aa).

The TF-B3 1 DNA-binding region spans 20-115; sequence FFKILRREDH…CFNVTIFEAD (96 aa). Disordered regions lie at residues 122-141 and 151-209; these read PRKT…RKSI and IESW…SEAG. Positions 166-177 are enriched in polar residues; the sequence is ESTSGRLTQKQE. Over residues 178–192 the composition is skewed to basic and acidic residues; the sequence is LNLRKKEADKTEKSK. The segment at residues 214–307 is a DNA-binding region (TF-B3 2); sequence IPEFKLTIKK…TEMRVKVSKE (94 aa).

It is found in the nucleus. The protein is B3 domain-containing protein At5g18000 of Arabidopsis thaliana (Mouse-ear cress).